A 598-amino-acid polypeptide reads, in one-letter code: Aspartate--tRNA(Asp/Asn) ligase (598 aa).

E174 is an L-aspartate binding site. Positions 198–201 (QQLK) are aspartate. Residue R220 coordinates L-aspartate. ATP contacts are provided by residues 220-222 (RDE) and Q229. H458 contributes to the L-aspartate binding site. E492 is a binding site for ATP. R499 contributes to the L-aspartate binding site. 544–547 (GIDR) serves as a coordination point for ATP.

Belongs to the class-II aminoacyl-tRNA synthetase family. Type 1 subfamily. As to quaternary structure, homodimer.

Its subcellular location is the cytoplasm. It carries out the reaction tRNA(Asx) + L-aspartate + ATP = L-aspartyl-tRNA(Asx) + AMP + diphosphate. Aspartyl-tRNA synthetase with relaxed tRNA specificity since it is able to aspartylate not only its cognate tRNA(Asp) but also tRNA(Asn). Reaction proceeds in two steps: L-aspartate is first activated by ATP to form Asp-AMP and then transferred to the acceptor end of tRNA(Asp/Asn). This chain is Aspartate--tRNA(Asp/Asn) ligase, found in Dehalococcoides mccartyi (strain ATCC BAA-2266 / KCTC 15142 / 195) (Dehalococcoides ethenogenes (strain 195)).